Reading from the N-terminus, the 144-residue chain is Transcription antitermination protein NusB (144 aa).

This sequence belongs to the NusB family.

Its function is as follows. Involved in transcription antitermination. Required for transcription of ribosomal RNA (rRNA) genes. Binds specifically to the boxA antiterminator sequence of the ribosomal RNA (rrn) operons. The chain is Transcription antitermination protein NusB from Carboxydothermus hydrogenoformans (strain ATCC BAA-161 / DSM 6008 / Z-2901).